Consider the following 94-residue polypeptide: Large ribosomal subunit protein bL27 (94 aa).

Positions 1–9 are excised as a propeptide; the sequence is MLKLNLQFF.

This sequence belongs to the bacterial ribosomal protein bL27 family. The N-terminus is cleaved by ribosomal processing cysteine protease Prp.

This Staphylococcus haemolyticus (strain JCSC1435) protein is Large ribosomal subunit protein bL27.